Here is a 423-residue protein sequence, read N- to C-terminus: MIDPKLLRNNIEVVNAGLAKRGVQLDVQEWASLETRRKDLQSKTEKLQAERNAGAKQVGQIKKSGGDASEIMARMQAIGDEIKAAEVALSELQNEIEQKALSIPNLPDESVPAGKDENDNVEISKWGTPRQFDFEIKDHTDLGEWMGGLEFETATKLTGSRFSVLKGPLARLQRALTQFMLDTHTLKNGYTEAYVPYLVNADSLRGTGQLPKFEEDLFKLQGEKEYYLIPTAEVPVTNFVRDEIIDADRLPLKYAAHTPCFRSEAGSYGRDTRGLIRQHQFDKVEMVQIVKPETSMQALEELTAHAEGILQALGLPYRKILLCGGDMGFGATKTYDLEVWVPSQNTYREISSCSNMGDFQARRMKARYRMDQKKTELVHTLNGSGLAVGRTLLAVMENYQREDGSIEIPEVLRPYMGGATFID.

231–233 (TAE) contributes to the L-serine binding site. An ATP-binding site is contributed by 262-264 (RSE). Residue Glu285 participates in L-serine binding. Residue 349-352 (EISS) participates in ATP binding. Ser384 provides a ligand contact to L-serine.

Belongs to the class-II aminoacyl-tRNA synthetase family. Type-1 seryl-tRNA synthetase subfamily. Homodimer. The tRNA molecule binds across the dimer.

The protein localises to the cytoplasm. The catalysed reaction is tRNA(Ser) + L-serine + ATP = L-seryl-tRNA(Ser) + AMP + diphosphate + H(+). It carries out the reaction tRNA(Sec) + L-serine + ATP = L-seryl-tRNA(Sec) + AMP + diphosphate + H(+). Its pathway is aminoacyl-tRNA biosynthesis; selenocysteinyl-tRNA(Sec) biosynthesis; L-seryl-tRNA(Sec) from L-serine and tRNA(Sec): step 1/1. Functionally, catalyzes the attachment of serine to tRNA(Ser). Is also able to aminoacylate tRNA(Sec) with serine, to form the misacylated tRNA L-seryl-tRNA(Sec), which will be further converted into selenocysteinyl-tRNA(Sec). This Acinetobacter baumannii (strain AB307-0294) protein is Serine--tRNA ligase.